Reading from the N-terminus, the 295-residue chain is Small ribosomal subunit protein uS2 (295 aa).

It belongs to the universal ribosomal protein uS2 family.

In Rickettsia typhi (strain ATCC VR-144 / Wilmington), this protein is Small ribosomal subunit protein uS2.